The chain runs to 992 residues: Aminopeptidase Q (992 aa).

Residues 2 to 13 (GPPSSSGFYVSR) lie on the Cytoplasmic side of the membrane. A helical; Signal-anchor for type II membrane protein membrane pass occupies residues 14-34 (AVALLLAALAAALLLALAVLA). The Extracellular portion of the chain corresponds to 35-992 (ALYGRCARVQ…RMTAWLRKNT (958 aa)). The disordered stretch occupies residues 47–92 (DLHHSGVPDAASSPRGTQEEPLPTWPPRPTREPAGTATPGHWRPPG). A glycan (N-linked (GlcNAc...) asparagine) is linked at Asn133. Residue Glu241 coordinates substrate. Asn262, Asn289, Asn347, and Asn361 each carry an N-linked (GlcNAc...) asparagine glycan. Residue 380–384 (SAMEN) coordinates substrate. His416 lines the Zn(2+) pocket. Catalysis depends on Glu417, which acts as the Proton acceptor. Residues His420 and Glu439 each contribute to the Zn(2+) site. Residue Tyr505 is the Proton donor of the active site. Residues Asn555, Asn584, Asn602, Asn609, Asn655, Asn811, Asn850, and Asn889 are each glycosylated (N-linked (GlcNAc...) asparagine).

This sequence belongs to the peptidase M1 family. Requires Zn(2+) as cofactor. As to expression, expressed in skin. Expression levels do not differ between dark and light skin areas.

It is found in the membrane. In terms of biological role, metalloprotease which may be important for placentation by regulating biological activity of key peptides at the embryo-maternal interface. Involved in coat pigmentation patterns. During skin development, may be required to establish the periodicity of tabby markings, initiating a pre-pattern at or before hair follicle development. In Felis catus (Cat), this protein is Aminopeptidase Q (LVRN).